Reading from the N-terminus, the 337-residue chain is Ketol-acid reductoisomerase (NADP(+)) (337 aa).

The KARI N-terminal Rossmann domain occupies V3 to T183. NADP(+) contacts are provided by residues Y26 to Q29, K49, S52, S54, and D84 to Q87. H109 is an active-site residue. G135 is an NADP(+) binding site. The KARI C-terminal knotted domain maps to T184–V329. Mg(2+) is bound by residues D192, E196, E228, and E232. Position 253 (S253) interacts with substrate.

The protein belongs to the ketol-acid reductoisomerase family. Mg(2+) serves as cofactor.

It carries out the reaction (2R)-2,3-dihydroxy-3-methylbutanoate + NADP(+) = (2S)-2-acetolactate + NADPH + H(+). It catalyses the reaction (2R,3R)-2,3-dihydroxy-3-methylpentanoate + NADP(+) = (S)-2-ethyl-2-hydroxy-3-oxobutanoate + NADPH + H(+). Its pathway is amino-acid biosynthesis; L-isoleucine biosynthesis; L-isoleucine from 2-oxobutanoate: step 2/4. The protein operates within amino-acid biosynthesis; L-valine biosynthesis; L-valine from pyruvate: step 2/4. Its function is as follows. Involved in the biosynthesis of branched-chain amino acids (BCAA). Catalyzes an alkyl-migration followed by a ketol-acid reduction of (S)-2-acetolactate (S2AL) to yield (R)-2,3-dihydroxy-isovalerate. In the isomerase reaction, S2AL is rearranged via a Mg-dependent methyl migration to produce 3-hydroxy-3-methyl-2-ketobutyrate (HMKB). In the reductase reaction, this 2-ketoacid undergoes a metal-dependent reduction by NADPH to yield (R)-2,3-dihydroxy-isovalerate. The chain is Ketol-acid reductoisomerase (NADP(+)) from Mycolicibacterium gilvum (strain PYR-GCK) (Mycobacterium gilvum (strain PYR-GCK)).